The chain runs to 79 residues: Large ribosomal subunit protein bL31c (79 aa).

The protein belongs to the bacterial ribosomal protein bL31 family. Type A subfamily. Part of the 50S ribosomal subunit.

The protein localises to the plastid. The protein resides in the chloroplast. Functionally, binds the 23S rRNA. The sequence is that of Large ribosomal subunit protein bL31c from Gracilaria tenuistipitata var. liui (Red alga).